The chain runs to 623 residues: Glutathione import ATP-binding protein GsiA (623 aa).

ABC transporter domains are found at residues 15–269 (VENL…RALL) and 314–564 (LRVR…RKLL). Residues 49 to 56 (GESGSGKS) and 357 to 364 (GESGSGKS) contribute to the ATP site.

The protein belongs to the ABC transporter superfamily. Glutathione importer (TC 3.A.1.5.11) family. The complex is composed of two ATP-binding proteins (GsiA), two transmembrane proteins (GsiC and GsiD) and a solute-binding protein (GsiB).

The protein localises to the cell inner membrane. It catalyses the reaction glutathione(out) + ATP + H2O = glutathione(in) + ADP + phosphate + H(+). Part of the ABC transporter complex GsiABCD involved in glutathione import. Responsible for energy coupling to the transport system. The chain is Glutathione import ATP-binding protein GsiA from Escherichia coli O6:H1 (strain CFT073 / ATCC 700928 / UPEC).